The chain runs to 334 residues: Ornithine carbamoyltransferase (334 aa).

Residues 57–60 (STRT), Gln-84, Arg-108, and 135–138 (HPTQ) contribute to the carbamoyl phosphate site. L-ornithine is bound by residues Asn-169, Asp-233, and 237-238 (SM). Residues 275 to 276 (CL) and Arg-320 each bind carbamoyl phosphate.

It belongs to the aspartate/ornithine carbamoyltransferase superfamily. OTCase family.

The protein localises to the cytoplasm. The enzyme catalyses carbamoyl phosphate + L-ornithine = L-citrulline + phosphate + H(+). It functions in the pathway amino-acid biosynthesis; L-arginine biosynthesis; L-arginine from L-ornithine and carbamoyl phosphate: step 1/3. Reversibly catalyzes the transfer of the carbamoyl group from carbamoyl phosphate (CP) to the N(epsilon) atom of ornithine (ORN) to produce L-citrulline. This Vibrio parahaemolyticus serotype O3:K6 (strain RIMD 2210633) protein is Ornithine carbamoyltransferase.